Reading from the N-terminus, the 866-residue chain is Speckle targeted PIP5K1A-regulated poly(A) polymerase (866 aa).

The Matrin-type zinc finger occupies 16-46 (FRCCLCDVTTANRPSLDAHLKGRKHRDLVQL). The RRM domain maps to 56-128 (RSVFVSGFPR…HTLRVRPREQ (73 aa)). The tract at residues 116-147 (LGGHTLRVRPREQKEFQSPASKSPKGVDSNSH) is disordered. Ser-205 is an ATP binding site. Asp-216 and Asp-218 together coordinate Mg(2+). Residues Asp-216 and Asp-218 each coordinate UTP. Disordered stretches follow at residues 223–249 (LGDMEEPQPDPQTPKLPEASSLDSTLA) and 267–321 (LSPT…EGKH). A compositionally biased stretch (polar residues) spans 282-304 (TPSSLAPQTPDSALGSDTVTSPQ). Asn-393 is a binding site for ATP. Positions 393, 415, 433, and 550 each coordinate UTP. The PAP-associated domain maps to 492 to 550 (LSSLLAQFFSCVSCWDLSGSLLSLREGQALMVAGGLPSDLWEGLRLGPMNLQDPFDLSH). The tract at residues 599-866 (SSPSSLLSAK…IPQALKNLLK (268 aa)) is KA1; binds the bulging loops of U6 snRNA but is dispensable for terminal uridylyltransferase activity. Disordered regions lie at residues 638–687 (QGTK…DHSE), 728–755 (EQNPMEPEGAGEGSPGETEKEASHPSSV), and 773–792 (RRRFQQQTKEEGRGGPSTGA). Positions 669–687 (KSCEEGKEEPQGCAGDHSE) are enriched in basic and acidic residues. Residues Ser-686 and Ser-741 each carry the phosphoserine modification.

It belongs to the DNA polymerase type-B-like family. As to quaternary structure, associates with the cleavage and polyadenylation specificity factor (CPSF) complex. Interacts with CPSF1 and CPSF3; the interaction is direct. Interacts with PIP5K1A. Mg(2+) is required as a cofactor. Mn(2+) serves as cofactor. Post-translationally, phosphorylated by CK1 in the proline-rich (Pro-rich) region.

The protein localises to the nucleus. It is found in the nucleolus. It localises to the nucleus speckle. The catalysed reaction is RNA(n) + UTP = RNA(n)-3'-uridine ribonucleotide + diphosphate. The enzyme catalyses RNA(n) + ATP = RNA(n)-3'-adenine ribonucleotide + diphosphate. With respect to regulation, adenylyltransferase activity is specifically phosphatidylinositol 4,5-bisphosphate (PtdIns(4,5)P2). In terms of biological role, poly(A) polymerase that creates the 3'-poly(A) tail of specific pre-mRNAs. Localizes to nuclear speckles together with PIP5K1A and mediates polyadenylation of a select set of mRNAs, such as HMOX1. In addition to polyadenylation, it is also required for the 3'-end cleavage of pre-mRNAs: binds to the 3'UTR of targeted pre-mRNAs and promotes the recruitment and assembly of the CPSF complex on the 3'UTR of pre-mRNAs. In addition to adenylyltransferase activity, also has uridylyltransferase activity. However, the ATP ratio is higher than UTP in cells, suggesting that it functions primarily as a poly(A) polymerase. Acts as a specific terminal uridylyltransferase for U6 snRNA in vitro: responsible for a controlled elongation reaction that results in the restoration of the four 3'-terminal UMP-residues found in newly transcribed U6 snRNA. Not involved in replication-dependent histone mRNA degradation. This chain is Speckle targeted PIP5K1A-regulated poly(A) polymerase (Tut1), found in Rattus norvegicus (Rat).